The sequence spans 126 residues: Fluoride-specific ion channel FluC (126 aa).

Transmembrane regions (helical) follow at residues 1 to 21 (MTATAFVAIGGGIGAVLRFHA), 33 to 53 (AVFPWGTFAINVVGSLLMGVL), 72 to 92 (VGVLGGFTTFSAFSLETALLV), and 97 to 117 (IGLAALYAAGSVVAGVTGLFL). Residues G76 and T79 each contribute to the Na(+) site.

Belongs to the fluoride channel Fluc/FEX (TC 1.A.43) family.

It is found in the cell inner membrane. The enzyme catalyses fluoride(in) = fluoride(out). With respect to regulation, na(+) is not transported, but it plays an essential structural role and its presence is essential for fluoride channel function. Its function is as follows. Fluoride-specific ion channel. Important for reducing fluoride concentration in the cell, thus reducing its toxicity. The polypeptide is Fluoride-specific ion channel FluC (Novosphingobium aromaticivorans (strain ATCC 700278 / DSM 12444 / CCUG 56034 / CIP 105152 / NBRC 16084 / F199)).